The primary structure comprises 178 residues: tRNA (cytidine(56)-2'-O)-methyltransferase (178 aa).

Residues Leu84, 112-116, and 130-137 contribute to the S-adenosyl-L-methionine site; these read GAEKV and VGNQPHSE.

The protein belongs to the aTrm56 family. In terms of assembly, homodimer.

It localises to the cytoplasm. It catalyses the reaction cytidine(56) in tRNA + S-adenosyl-L-methionine = 2'-O-methylcytidine(56) in tRNA + S-adenosyl-L-homocysteine + H(+). Specifically catalyzes the AdoMet-dependent 2'-O-ribose methylation of cytidine at position 56 in tRNAs. This is tRNA (cytidine(56)-2'-O)-methyltransferase from Methanocella arvoryzae (strain DSM 22066 / NBRC 105507 / MRE50).